The following is a 151-amino-acid chain: uncharacterized protein (151 aa).

The next 4 helical transmembrane spans lie at 22–42 (IVSITFIAAIALAVIFGGFFF), 62–82 (ALFILACFAVGLIIDPLTKII), 97–117 (LFAFILYFISNLITICFADYF), and 121–141 (IYIPDVLLVVISAFMAIIELA).

It is found in the cell membrane. This is an uncharacterized protein from Bacillus subtilis (strain 168).